The chain runs to 98 residues: uncharacterized protein (98 aa).

A run of 2 helical transmembrane segments spans residues 13-33 (LFSL…IAIF) and 65-85 (IMVI…IFIS).

The protein resides in the membrane. This is an uncharacterized protein from Saccharomyces cerevisiae (strain ATCC 204508 / S288c) (Baker's yeast).